Here is a 290-residue protein sequence, read N- to C-terminus: Iron-sulfur cluster carrier protein (290 aa).

47–54 lines the ATP pocket; that stretch reads GKGGVGKS.

The protein belongs to the Mrp/NBP35 ATP-binding proteins family. In terms of assembly, homodimer.

Its function is as follows. Binds and transfers iron-sulfur (Fe-S) clusters to target apoproteins. Can hydrolyze ATP. The chain is Iron-sulfur cluster carrier protein from Methanocaldococcus jannaschii (strain ATCC 43067 / DSM 2661 / JAL-1 / JCM 10045 / NBRC 100440) (Methanococcus jannaschii).